The sequence spans 341 residues: MKILEFDDKKGIMKLHIENEDDLWILHIILKKGDRVVAKTTRDVSMGRESRRIPMIIKLQVEYTEFQSFTSRLRIHGIILDAPERFGIKGSHHTINLDIGDEIVIEKDHWNKFEIEKIKRQEEKHLKMLIVLVDFDEYLIALPMKQGIRILAEKSLRTPNKEEENIIEDNAKEVANEVLSYAESLGIEVVLLAGPGPFKEIVSNFLKNIKLYVDSVSSATRSGLNEILKRDIIDQISRDYEISEETKIMEKIMENLAKNTGLVAYGKEEVKKSAEYGAVDKLLVIEDLLSSDEEERMEIEKIMEEVENKNGRVLIVPKDSPIYYEVRNLTGLIALLRFRIN.

It belongs to the eukaryotic release factor 1 family. Pelota subfamily. In terms of assembly, monomer. A divalent metal cation serves as cofactor.

It localises to the cytoplasm. Functionally, may function in recognizing stalled ribosomes, interact with stem-loop structures in stalled mRNA molecules, and effect endonucleolytic cleavage of the mRNA. May play a role in the release non-functional ribosomes and degradation of damaged mRNAs. Has endoribonuclease activity. This is Protein pelota homolog from Sulfurisphaera tokodaii (strain DSM 16993 / JCM 10545 / NBRC 100140 / 7) (Sulfolobus tokodaii).